A 163-amino-acid polypeptide reads, in one-letter code: Photosystem II extrinsic protein V (163 aa).

The N-terminal stretch at 1 to 26 (MLKRSSWLATLLGLLTVASVSTIVYA) is a signal peptide. Heme c-binding residues include C63, C66, H67, and H118.

The protein belongs to the cytochrome c family. PsbV subfamily. As to quaternary structure, PSII is composed of 1 copy each of membrane proteins PsbA, PsbB, PsbC, PsbD, PsbE, PsbF, PsbH, PsbI, PsbJ, PsbK, PsbL, PsbM, PsbT, PsbY, PsbZ, Psb30/Ycf12, at least 3 peripheral proteins of the oxygen-evolving complex and a large number of cofactors. It forms dimeric complexes. The extrinsic subunits in red algae are PsbO (OEC33), PsbQ', cytochrome c-550 and PsbU. The cofactor is heme c.

It is found in the plastid. Its subcellular location is the chloroplast thylakoid membrane. One of the extrinsic, lumenal subunits of photosystem II (PSII). PSII is a light-driven water plastoquinone oxidoreductase, using light energy to abstract electrons from H(2)O, generating a proton gradient subsequently used for ATP formation. The extrinsic proteins stabilize the structure of photosystem II oxygen-evolving complex (OEC), the ion environment of oxygen evolution and protect the OEC against heat-induced inactivation. This is Photosystem II extrinsic protein V from Porphyra purpurea (Red seaweed).